The chain runs to 235 residues: Small ribosomal subunit protein eS4 (235 aa).

The S4 RNA-binding domain occupies 37-100; sequence LPLGIIIRDI…NETYRMFQDE (64 aa).

This sequence belongs to the eukaryotic ribosomal protein eS4 family.

The polypeptide is Small ribosomal subunit protein eS4 (Methanosarcina barkeri (strain Fusaro / DSM 804)).